A 511-amino-acid chain; its full sequence is Probable mannosyl-oligosaccharide alpha-1,2-mannosidase 1B (511 aa).

Residues Met-1–Ala-18 form the signal peptide. 2 N-linked (GlcNAc...) asparagine glycosylation sites follow: Asn-90 and Asn-177. A disulfide bond links Cys-327 and Cys-356. The active-site Proton donor is Glu-370. Asn-433 carries N-linked (GlcNAc...) asparagine glycosylation. Thr-501 lines the Ca(2+) pocket.

It belongs to the glycosyl hydrolase 47 family. In terms of assembly, monomer. It depends on Ca(2+) as a cofactor. Requires Mg(2+) as cofactor.

It is found in the cytoplasmic vesicle lumen. The catalysed reaction is N(4)-(alpha-D-Man-(1-&gt;2)-alpha-D-Man-(1-&gt;2)-alpha-D-Man-(1-&gt;3)-[alpha-D-Man-(1-&gt;2)-alpha-D-Man-(1-&gt;3)-[alpha-D-Man-(1-&gt;2)-alpha-D-Man-(1-&gt;6)]-alpha-D-Man-(1-&gt;6)]-beta-D-Man-(1-&gt;4)-beta-D-GlcNAc-(1-&gt;4)-beta-D-GlcNAc)-L-asparaginyl-[protein] (N-glucan mannose isomer 9A1,2,3B1,2,3) + 4 H2O = N(4)-(alpha-D-Man-(1-&gt;3)-[alpha-D-Man-(1-&gt;3)-[alpha-D-Man-(1-&gt;6)]-alpha-D-Man-(1-&gt;6)]-beta-D-Man-(1-&gt;4)-beta-D-GlcNAc-(1-&gt;4)-beta-D-GlcNAc)-L-asparaginyl-[protein] (N-glucan mannose isomer 5A1,2) + 4 beta-D-mannose. It carries out the reaction N(4)-(alpha-D-Man-(1-&gt;2)-alpha-D-Man-(1-&gt;2)-alpha-D-Man-(1-&gt;3)-[alpha-D-Man-(1-&gt;3)-[alpha-D-Man-(1-&gt;2)-alpha-D-Man-(1-&gt;6)]-alpha-D-Man-(1-&gt;6)]-beta-D-Man-(1-&gt;4)-beta-D-GlcNAc-(1-&gt;4)-beta-D-GlcNAc)-L-asparaginyl-[protein] (N-glucan mannose isomer 8A1,2,3B1,3) + 3 H2O = N(4)-(alpha-D-Man-(1-&gt;3)-[alpha-D-Man-(1-&gt;3)-[alpha-D-Man-(1-&gt;6)]-alpha-D-Man-(1-&gt;6)]-beta-D-Man-(1-&gt;4)-beta-D-GlcNAc-(1-&gt;4)-beta-D-GlcNAc)-L-asparaginyl-[protein] (N-glucan mannose isomer 5A1,2) + 3 beta-D-mannose. The protein operates within protein modification; protein glycosylation. In terms of biological role, involved in the maturation of Asn-linked oligosaccharides. Progressively trims alpha-1,2-linked mannose residues from Man(9)GlcNAc(2) to produce Man(5)GlcNAc(2). In Aspergillus clavatus (strain ATCC 1007 / CBS 513.65 / DSM 816 / NCTC 3887 / NRRL 1 / QM 1276 / 107), this protein is Probable mannosyl-oligosaccharide alpha-1,2-mannosidase 1B (mns1B).